We begin with the raw amino-acid sequence, 348 residues long: MNTRKIQMPREVYIGPDVIYETGEICKDLHLDNKVLVLTGPNTYDIAAKHAIESLENQDIEVDVKIVEKVSYDSVEEVSEMITSGTNVLGVGGGKVIDVAKLASYDKNVFFVSMPTTASHDGIVSPLASIKNPKTSTSAKAHAPIAVIADSKIIANSPFRLLSAGCADLISNFTAIKDWQLAHRLKNESYSESAASLSIMSAKMITDNVDSIKPGLEESARLVVKTLFSSGMAISIAGSSRPASGSEHTFSHALDKILDKPCLHGEQCGVGTILMMYLYGGDWKFIRDSLKAVGAPTSAKELGISDENVIDALTMAHTIRPERYTILGDNGISEDAAYELALKTGVIK.

NAD(+)-binding positions include 94–98 and 116–119; these read GKVID and TTAS. Residue D121 coordinates substrate. S125 contacts NAD(+). D168 contacts substrate. Zn(2+)-binding residues include D168 and H248. Position 252 (H252) interacts with substrate. H264 contacts Zn(2+).

The protein belongs to the glycerol-1-phosphate dehydrogenase family. In terms of assembly, homooctamer. Zn(2+) is required as a cofactor.

It is found in the cytoplasm. It catalyses the reaction sn-glycerol 1-phosphate + NAD(+) = dihydroxyacetone phosphate + NADH + H(+). It carries out the reaction sn-glycerol 1-phosphate + NADP(+) = dihydroxyacetone phosphate + NADPH + H(+). The protein operates within membrane lipid metabolism; glycerophospholipid metabolism. In terms of biological role, catalyzes the NAD(P)H-dependent reduction of dihydroxyacetonephosphate (DHAP or glycerone phosphate) to glycerol 1-phosphate (G1P). The G1P thus generated is used as the glycerophosphate backbone of phospholipids in the cellular membranes of Archaea. This Methanobrevibacter smithii (strain ATCC 35061 / DSM 861 / OCM 144 / PS) protein is Glycerol-1-phosphate dehydrogenase [NAD(P)+].